Here is a 208-residue protein sequence, read N- to C-terminus: Protein-L-isoaspartate O-methyltransferase (208 aa).

Ser59 is a catalytic residue.

This sequence belongs to the methyltransferase superfamily. L-isoaspartyl/D-aspartyl protein methyltransferase family.

It localises to the cytoplasm. It carries out the reaction [protein]-L-isoaspartate + S-adenosyl-L-methionine = [protein]-L-isoaspartate alpha-methyl ester + S-adenosyl-L-homocysteine. Catalyzes the methyl esterification of L-isoaspartyl residues in peptides and proteins that result from spontaneous decomposition of normal L-aspartyl and L-asparaginyl residues. It plays a role in the repair and/or degradation of damaged proteins. This Salmonella arizonae (strain ATCC BAA-731 / CDC346-86 / RSK2980) protein is Protein-L-isoaspartate O-methyltransferase.